Here is a 498-residue protein sequence, read N- to C-terminus: ATP synthase subunit beta, chloroplastic (498 aa).

172–179 (GGAGVGKT) is an ATP binding site.

This sequence belongs to the ATPase alpha/beta chains family. F-type ATPases have 2 components, CF(1) - the catalytic core - and CF(0) - the membrane proton channel. CF(1) has five subunits: alpha(3), beta(3), gamma(1), delta(1), epsilon(1). CF(0) has four main subunits: a(1), b(1), b'(1) and c(9-12).

Its subcellular location is the plastid. It is found in the chloroplast thylakoid membrane. The catalysed reaction is ATP + H2O + 4 H(+)(in) = ADP + phosphate + 5 H(+)(out). Produces ATP from ADP in the presence of a proton gradient across the membrane. The catalytic sites are hosted primarily by the beta subunits. This is ATP synthase subunit beta, chloroplastic from Liriodendron tulipifera (Tuliptree).